Reading from the N-terminus, the 751-residue chain is Ecdysteroid-phosphate phosphatase (751 aa).

The region spanning 16 to 60 (CISKQHLTPLQTLLQMGFPRHRAEKALASTGNRGVQIASDWLLAH) is the UBA domain. In terms of domain architecture, SH3 spans 271–336 (ATKQVQKVVY…PVNYTERTAE (66 aa)). Disordered regions lie at residues 367–394 (GRSISTEPDDRQNTAHPDIIEGSSFEES) and 458–484 (EPPAAQPPRPDDTLSVHSDHSLHPGSL). A compositionally biased stretch (basic and acidic residues) spans 466-479 (RPDDTLSVHSDHSL). A phosphatase-like region spans residues 490 to 751 (KNRKIYIMRH…RFEWNALSAT (262 aa)). Arginine 498 is a catalytic residue. Histidine 499 acts as the Tele-phosphohistidine intermediate in catalysis. The active site involves histidine 681.

The protein resides in the cytoplasm. The protein localises to the cytosol. It is found in the nucleus. It catalyses the reaction ecdysone 22-phosphate + H2O = ecdysone + phosphate. The enzyme catalyses 20-hydroxyecdysone 22-phosphate + H2O = 20-hydroxyecdysone + phosphate. The catalysed reaction is 2-deoxyecdysone 22-phosphate + H2O = 2-deoxyecdysone + phosphate. Steroid phosphatase that dephosphorylates ecdysteroids such as ecdysone 22-phosphate (E22P), 3-epi-ecdysone 22-phosphate (E22P) and 3-epi-ecdysone 2-phosphate (E2P). Likely catalyzes the conversion of inactive phosphorylated ecdysteroids into their active forms. Shows high activity towards ecdysone 22-phosphate (E22P), but is also significantly active against 3-epi-ecdysone 22-phosphate (E22P) and 3-epi-ecdysone 2-phosphate (E2P). Also displays acid phosphatase activity towards 4-nitrophenyl phosphate (pNNP) in vitro. Has no activity towards 3-epi-ecdysone 3-phosphate (E3P). This Drosophila melanogaster (Fruit fly) protein is Ecdysteroid-phosphate phosphatase.